The following is a 371-amino-acid chain: N-acetyldiaminopimelate deacetylase (371 aa).

Asp-68 is a catalytic residue. Glu-127 functions as the Proton acceptor in the catalytic mechanism.

This sequence belongs to the peptidase M20A family. N-acetyldiaminopimelate deacetylase subfamily.

It catalyses the reaction N-acetyl-(2S,6S)-2,6-diaminopimelate + H2O = (2S,6S)-2,6-diaminopimelate + acetate. It functions in the pathway amino-acid biosynthesis; L-lysine biosynthesis via DAP pathway; LL-2,6-diaminopimelate from (S)-tetrahydrodipicolinate (acetylase route): step 3/3. Catalyzes the conversion of N-acetyl-diaminopimelate to diaminopimelate and acetate. The protein is N-acetyldiaminopimelate deacetylase of Listeria welshimeri serovar 6b (strain ATCC 35897 / DSM 20650 / CCUG 15529 / CIP 8149 / NCTC 11857 / SLCC 5334 / V8).